Here is a 192-residue protein sequence, read N- to C-terminus: Large ribosomal subunit protein bL25 (192 aa).

This sequence belongs to the bacterial ribosomal protein bL25 family. CTC subfamily. As to quaternary structure, part of the 50S ribosomal subunit; part of the 5S rRNA/L5/L18/L25 subcomplex. Contacts the 5S rRNA. Binds to the 5S rRNA independently of L5 and L18.

In terms of biological role, this is one of the proteins that binds to the 5S RNA in the ribosome where it forms part of the central protuberance. The protein is Large ribosomal subunit protein bL25 of Porphyromonas gingivalis (strain ATCC 33277 / DSM 20709 / CIP 103683 / JCM 12257 / NCTC 11834 / 2561).